The primary structure comprises 285 residues: Hydroxyethylthiazole kinase 1 (285 aa).

Methionine 48 contacts substrate. 2 residues coordinate ATP: arginine 124 and serine 183. Substrate is bound at residue glycine 210.

The protein belongs to the Thz kinase family. It depends on Mg(2+) as a cofactor.

It carries out the reaction 5-(2-hydroxyethyl)-4-methylthiazole + ATP = 4-methyl-5-(2-phosphooxyethyl)-thiazole + ADP + H(+). Its pathway is cofactor biosynthesis; thiamine diphosphate biosynthesis; 4-methyl-5-(2-phosphoethyl)-thiazole from 5-(2-hydroxyethyl)-4-methylthiazole: step 1/1. In terms of biological role, catalyzes the phosphorylation of the hydroxyl group of 4-methyl-5-beta-hydroxyethylthiazole (THZ). The protein is Hydroxyethylthiazole kinase 1 of Methanosphaera stadtmanae (strain ATCC 43021 / DSM 3091 / JCM 11832 / MCB-3).